The primary structure comprises 340 residues: 4-hydroxy-3-methylbut-2-enyl diphosphate reductase (340 aa).

Cys-18 lines the [4Fe-4S] cluster pocket. 2 residues coordinate (2E)-4-hydroxy-3-methylbut-2-enyl diphosphate: His-47 and His-83. Dimethylallyl diphosphate is bound by residues His-47 and His-83. 2 residues coordinate isopentenyl diphosphate: His-47 and His-83. Residue Cys-105 coordinates [4Fe-4S] cluster. A (2E)-4-hydroxy-3-methylbut-2-enyl diphosphate-binding site is contributed by His-133. His-133 serves as a coordination point for dimethylallyl diphosphate. An isopentenyl diphosphate-binding site is contributed by His-133. Glu-135 serves as the catalytic Proton donor. Residue Thr-174 participates in (2E)-4-hydroxy-3-methylbut-2-enyl diphosphate binding. Cys-204 lines the [4Fe-4S] cluster pocket. 4 residues coordinate (2E)-4-hydroxy-3-methylbut-2-enyl diphosphate: Ser-232, Ser-233, Asn-234, and Ser-277. 4 residues coordinate dimethylallyl diphosphate: Ser-232, Ser-233, Asn-234, and Ser-277. The isopentenyl diphosphate site is built by Ser-232, Ser-233, Asn-234, and Ser-277.

The protein belongs to the IspH family. The cofactor is [4Fe-4S] cluster.

It catalyses the reaction isopentenyl diphosphate + 2 oxidized [2Fe-2S]-[ferredoxin] + H2O = (2E)-4-hydroxy-3-methylbut-2-enyl diphosphate + 2 reduced [2Fe-2S]-[ferredoxin] + 2 H(+). It carries out the reaction dimethylallyl diphosphate + 2 oxidized [2Fe-2S]-[ferredoxin] + H2O = (2E)-4-hydroxy-3-methylbut-2-enyl diphosphate + 2 reduced [2Fe-2S]-[ferredoxin] + 2 H(+). Its pathway is isoprenoid biosynthesis; dimethylallyl diphosphate biosynthesis; dimethylallyl diphosphate from (2E)-4-hydroxy-3-methylbutenyl diphosphate: step 1/1. The protein operates within isoprenoid biosynthesis; isopentenyl diphosphate biosynthesis via DXP pathway; isopentenyl diphosphate from 1-deoxy-D-xylulose 5-phosphate: step 6/6. Its function is as follows. Catalyzes the conversion of 1-hydroxy-2-methyl-2-(E)-butenyl 4-diphosphate (HMBPP) into a mixture of isopentenyl diphosphate (IPP) and dimethylallyl diphosphate (DMAPP). Acts in the terminal step of the DOXP/MEP pathway for isoprenoid precursor biosynthesis. This chain is 4-hydroxy-3-methylbut-2-enyl diphosphate reductase, found in Bartonella quintana (strain Toulouse) (Rochalimaea quintana).